The primary structure comprises 171 residues: MHQVISATTNPAKIQAILQAFEEIFGEGSCHITPVAVESGVPEQPFGSEETRAGARNRVDNARRLHPQADFWVAIEAGIDDDATFSWVVIDNGVQRGEARSATLPLPAVILDRVRQGEALGPVMSQYTGIDEIGRKEGAIGVFTAGKLTRSSVYYQAVILALSPFHNAVYR.

Residue 8-13 (TTNPAK) coordinates substrate. Positions 38 and 68 each coordinate Mg(2+).

This sequence belongs to the YjjX NTPase family. As to quaternary structure, homodimer. Mg(2+) is required as a cofactor. Requires Mn(2+) as cofactor.

It catalyses the reaction XTP + H2O = XDP + phosphate + H(+). The enzyme catalyses ITP + H2O = IDP + phosphate + H(+). Phosphatase that hydrolyzes non-canonical purine nucleotides such as XTP and ITP to their respective diphosphate derivatives. Probably excludes non-canonical purines from DNA/RNA precursor pool, thus preventing their incorporation into DNA/RNA and avoiding chromosomal lesions. In Salmonella typhimurium (strain LT2 / SGSC1412 / ATCC 700720), this protein is Inosine/xanthosine triphosphatase (yjjX).